The primary structure comprises 645 residues: Threonine--tRNA ligase (645 aa).

One can recognise a TGS domain in the interval 3–64 (DMINITFPDG…EQDGTITIVT (62 aa)). Residues 247-544 (DHRKLGKELG…LLEEYKGAFP (298 aa)) form a catalytic region. The Zn(2+) site is built by Cys-340, His-391, and His-521.

This sequence belongs to the class-II aminoacyl-tRNA synthetase family. As to quaternary structure, homodimer. It depends on Zn(2+) as a cofactor.

It is found in the cytoplasm. It carries out the reaction tRNA(Thr) + L-threonine + ATP = L-threonyl-tRNA(Thr) + AMP + diphosphate + H(+). Catalyzes the attachment of threonine to tRNA(Thr) in a two-step reaction: L-threonine is first activated by ATP to form Thr-AMP and then transferred to the acceptor end of tRNA(Thr). Also edits incorrectly charged L-seryl-tRNA(Thr). This Halalkalibacterium halodurans (strain ATCC BAA-125 / DSM 18197 / FERM 7344 / JCM 9153 / C-125) (Bacillus halodurans) protein is Threonine--tRNA ligase.